We begin with the raw amino-acid sequence, 488 residues long: N-succinylglutamate 5-semialdehyde dehydrogenase (488 aa).

Glycine 221 to glycine 226 lines the NAD(+) pocket. Active-site residues include glutamate 244 and cysteine 278.

This sequence belongs to the aldehyde dehydrogenase family. AstD subfamily.

It catalyses the reaction N-succinyl-L-glutamate 5-semialdehyde + NAD(+) + H2O = N-succinyl-L-glutamate + NADH + 2 H(+). The protein operates within amino-acid degradation; L-arginine degradation via AST pathway; L-glutamate and succinate from L-arginine: step 4/5. In terms of biological role, catalyzes the NAD-dependent reduction of succinylglutamate semialdehyde into succinylglutamate. The chain is N-succinylglutamate 5-semialdehyde dehydrogenase from Pseudomonas fluorescens (strain Pf0-1).